The sequence spans 313 residues: Dehydrodolichyl diphosphate synthase CPT5, chloroplastic (313 aa).

A chloroplast-targeting transit peptide spans 1–42; sequence MAFSFQLQQVFPFPVKFCSQPKSIKLQIFPNLTKRLPIHPLA. Asp89 is an active-site residue.

This sequence belongs to the UPP synthase family. The cofactor is Mg(2+). In terms of tissue distribution, expressed in leaf trichomes, stem trichomes and old leaves. Expressed at low levels in young leaves and flowers.

The protein localises to the plastid. Its subcellular location is the chloroplast. It catalyses the reaction n isopentenyl diphosphate + (2E,6E)-farnesyl diphosphate = a di-trans,poly-cis-polyprenyl diphosphate + n diphosphate. In terms of biological role, catalyzes cis-prenyl chain elongation to produce the polyprenyl backbone of dolichol, a glycosyl carrier-lipid required for the biosynthesis of several classes of glycoprotein. This chain is Dehydrodolichyl diphosphate synthase CPT5, chloroplastic, found in Solanum lycopersicum (Tomato).